A 916-amino-acid chain; its full sequence is Translation initiation factor IF-2 (916 aa).

Residues 1-325 (MTDSNDDKTL…QEKFRRSQVQ (325 aa)) form a disordered region. Positions 60-91 (ITPATPAAPVRAAEPAPAPAQARPQQSTPAPR) are enriched in low complexity. Polar residues predominate over residues 97–108 (GQANQRPQQSYQ). Basic and acidic residues predominate over residues 125-182 (SPEEMDARRRALAESQARDAQDAIRRAEEEKRRAAEEAVRKAAEAEEAARRAVEEAAR). 2 stretches are compositionally biased toward low complexity: residues 183–209 (QAEA…AEAR) and 229–243 (DGAA…PAAV). Residues 414–581 (SRPPVVTIMG…AVLLQAEILD (168 aa)) enclose the tr-type G domain. The interval 423 to 430 (GHVDHGKT) is G1. 423 to 430 (GHVDHGKT) is a binding site for GTP. Residues 448–452 (GITQH) form a G2 region. The G3 stretch occupies residues 469–472 (DTPG). GTP-binding positions include 469–473 (DTPGH) and 523–526 (NKID). A G4 region spans residues 523-526 (NKID). Residues 559-561 (SAK) form a G5 region.

It belongs to the TRAFAC class translation factor GTPase superfamily. Classic translation factor GTPase family. IF-2 subfamily.

Its subcellular location is the cytoplasm. Functionally, one of the essential components for the initiation of protein synthesis. Protects formylmethionyl-tRNA from spontaneous hydrolysis and promotes its binding to the 30S ribosomal subunits. Also involved in the hydrolysis of GTP during the formation of the 70S ribosomal complex. The protein is Translation initiation factor IF-2 of Rhizobium etli (strain ATCC 51251 / DSM 11541 / JCM 21823 / NBRC 15573 / CFN 42).